Consider the following 366-residue polypeptide: Aminomethyltransferase (366 aa).

Belongs to the GcvT family. The glycine cleavage system is composed of four proteins: P, T, L and H.

It carries out the reaction N(6)-[(R)-S(8)-aminomethyldihydrolipoyl]-L-lysyl-[protein] + (6S)-5,6,7,8-tetrahydrofolate = N(6)-[(R)-dihydrolipoyl]-L-lysyl-[protein] + (6R)-5,10-methylene-5,6,7,8-tetrahydrofolate + NH4(+). The glycine cleavage system catalyzes the degradation of glycine. The chain is Aminomethyltransferase from Bacillus velezensis (strain DSM 23117 / BGSC 10A6 / LMG 26770 / FZB42) (Bacillus amyloliquefaciens subsp. plantarum).